Reading from the N-terminus, the 872-residue chain is Probable GPI-anchored adhesin-like protein PGA25 (872 aa).

A signal peptide spans 1–19 (MKVTAVSSVLLTVAALTNA). Positions 43 to 65 (PAAAPAAQPAAQPTTQSPADQPT) are enriched in low complexity. Disordered stretches follow at residues 43–383 (PAAA…TIIP), 492–517 (KPTG…DETD), and 623–809 (PDDW…ECDT). Over residues 66–83 (VQSPVSSDQPSTAQPVAQ) the composition is skewed to polar residues. 2 stretches are compositionally biased toward low complexity: residues 84-110 (NNLL…TRST) and 125-171 (SSEA…SSSS). Asn92 carries an N-linked (GlcNAc...) asparagine glycan. The segment covering 196-207 (ETDDEDCVEETE) has biased composition (acidic residues). Composition is skewed to low complexity over residues 208–225 (SPTS…VATT), 242–260 (SSAP…SSTT), and 274–293 (SSVP…NTTT). An N-linked (GlcNAc...) asparagine glycan is attached at Asn290. A compositionally biased stretch (acidic residues) spans 317–328 (AEEDDEECEDPT). Low complexity predominate over residues 349–363 (TSQSKTSVSSVVSKS). A compositionally biased stretch (acidic residues) spans 366-376 (EDDDDETECET). The span at 495–506 (GSGSITVLPTKS) shows a compositional bias: polar residues. Composition is skewed to acidic residues over residues 624–635 (DDWEDDGYEGED) and 646–659 (DDGE…DDGE). Composition is skewed to gly residues over residues 666 to 692 (SSSG…GSGS), 701 to 710 (SSGGTWGGSG), and 731 to 740 (SWWGGSGSGS). A compositionally biased stretch (low complexity) spans 741 to 760 (SSGSSSGVSSGDSGSSSVTG). Positions 761-771 (GSSGSWWGGSG) are enriched in gly residues. Acidic residues predominate over residues 780–808 (DGYDDEDDQTPEPECDDEDDSWDDDEECD). The GPI-anchor amidated alanine moiety is linked to residue Ala845. A propeptide spans 846–872 (QSVTQIENIGGKVSASGLFVVLGLLLI) (removed in mature form).

It belongs to the HYR1/IFF family. The GPI-anchor is attached to the protein in the endoplasmic reticulum and serves to target the protein to the cell surface. There, the glucosamine-inositol phospholipid moiety is cleaved off and the GPI-modified mannoprotein is covalently attached via its lipidless GPI glycan remnant to the 1,6-beta-glucan of the outer cell wall layer.

The protein localises to the secreted. It localises to the cell wall. The protein resides in the membrane. Its function is as follows. Probable GPI-anchored cell wall protein involved in cell wall organization, hyphal growth, as well as in host-fungal interaction and virulence. This chain is Probable GPI-anchored adhesin-like protein PGA25 (PGA25), found in Candida albicans (strain SC5314 / ATCC MYA-2876) (Yeast).